The chain runs to 307 residues: MSTHTPPSSATPTSGQGVRPLTTADIRKAKGRQRLAMLTAYDYTSARIVDGAGADLILVGDSLGMVMLGREDTLSVTLDEMLHHCRAVVRGTRHAMVVADMPFMTYETGVRDALLNGARLFRESGVRAVKLEGAGPVLPQVRALVDAGIPVMGHLGLTPQRVAEMGGFKVQGRQAEAALRLFDDALALQEAGCFSLVLECVPAPVAEQVTARLHIPTIGIGAGAGCDGQVLVLHDMLGLYGELSPRFVKRYADLAGMAGEAVARYAHEVREGSFPAAEHTFGIDDGQFEAFMAALDKRGCRQTPTGE.

Mg(2+) contacts are provided by Asp61 and Asp100. 3-methyl-2-oxobutanoate contacts are provided by residues 61-62, Asp100, and Lys130; that span reads DS. Residue Glu132 coordinates Mg(2+). The active-site Proton acceptor is Glu199.

The protein belongs to the PanB family. As to quaternary structure, homodecamer; pentamer of dimers. It depends on Mg(2+) as a cofactor.

The protein localises to the cytoplasm. The catalysed reaction is 3-methyl-2-oxobutanoate + (6R)-5,10-methylene-5,6,7,8-tetrahydrofolate + H2O = 2-dehydropantoate + (6S)-5,6,7,8-tetrahydrofolate. It functions in the pathway cofactor biosynthesis; (R)-pantothenate biosynthesis; (R)-pantoate from 3-methyl-2-oxobutanoate: step 1/2. Catalyzes the reversible reaction in which hydroxymethyl group from 5,10-methylenetetrahydrofolate is transferred onto alpha-ketoisovalerate to form ketopantoate. In Nitratidesulfovibrio vulgaris (strain ATCC 29579 / DSM 644 / CCUG 34227 / NCIMB 8303 / VKM B-1760 / Hildenborough) (Desulfovibrio vulgaris), this protein is 3-methyl-2-oxobutanoate hydroxymethyltransferase.